A 656-amino-acid chain; its full sequence is Solute carrier family 5 member 4A (656 aa).

Over 1 to 28 the chain is Cytoplasmic; it reads MASTASVSTSTASSELSSLSNNINNAAD. The chain crosses the membrane as a helical span at residues 29–47; it reads ISVIVIYFVVVMAVGVWAM. The Extracellular portion of the chain corresponds to 48-64; sequence LKTNRSTVGGFFLAGRS. The helical transmembrane segment at 65–85 threads the bilayer; that stretch reads MTWWPMGASLFASNIGSGHFV. At 86 to 105 the chain is on the cytoplasmic side; that stretch reads GLAGTGAASGIAVTAFESHS. Residues 106-126 traverse the membrane as a helical segment; it reads FALLLVLGWIFVPIYIKAGVM. Over 127 to 171 the chain is Extracellular; that stretch reads TMPEYLKKRFGGKRLQIYLSILFLFICVILTISADIFSGAIFIKL. A helical membrane pass occupies residues 172-191; sequence ALGLNLYLAILILLAITAIF. Topologically, residues 192–208 are cytoplasmic; that stretch reads TITGGLASVIYTDTVQA. The helical transmembrane segment at 209-229 threads the bilayer; that stretch reads VIMLVGSFILMVFAFVEVGGY. At 230–270 the chain is on the extracellular side; sequence ESFTEKFMNAIPSVVEGDNLTINSRCYTPQPDSFHIFRDPV. Asparagine 248 carries an N-linked (GlcNAc...) asparagine glycan. A helical transmembrane segment spans residues 271–291; sequence TGDIPWPGTAFGMPITALWYW. Residues 292-314 lie on the Cytoplasmic side of the membrane; sequence CINQVIVQRCLCGKNLSHVKAAC. Residues 315 to 334 form a helical membrane-spanning segment; that stretch reads ILCGYLKLLPLFFMVMPGMI. At 335–423 the chain is on the extracellular side; that stretch reads SRILYTDMVA…RKKASERELL (89 aa). A helical membrane pass occupies residues 424-443; that stretch reads IAGRLFVSVLIVTSILWVPI. Topologically, residues 444-455 are cytoplasmic; sequence VEVSQGGQLVHY. The chain crosses the membrane as a helical span at residues 456–476; it reads TEAISSYLGPPIAAVFLVAVF. Topologically, residues 477 to 526 are extracellular; the sequence is CKRANEQGAFWGLMVGLVMGLIRMIAEFSYGTGSCLAPSSCPKIICGVHY. Residues 527-547 form a helical membrane-spanning segment; sequence LYFAIILFFVCILVILGVSYL. Residues 548–634 lie on the Cytoplasmic side of the membrane; that stretch reads TKPIPDVHLH…TDTTEKPFWR (87 aa). Residues 574–593 form a disordered region; that stretch reads DAEDKEENGADDRTEEDQTE. Residues 635–655 form a helical membrane-spanning segment; that stretch reads TVMNVNVILLLAVAAFFYGYF.

It belongs to the sodium:solute symporter (SSF) (TC 2.A.21) family. As to expression, expressed in small intestine. Expressed in kidney.

It localises to the cell membrane. Its activity is regulated as follows. Not inhibited by phlorizin. In terms of biological role, does not function as sodium/D-glucose symporter. Generates D-glucose-induced depolarization in a pH-dependent manner, with activity in acidic conditions (pH 5) but not neutral conditions. This Mus musculus (Mouse) protein is Solute carrier family 5 member 4A.